Consider the following 366-residue polypeptide: Protein-glutamate methylesterase/protein-glutamine glutaminase (366 aa).

One can recognise a Response regulatory domain in the interval 5–123 (RVLVVDDSVV…SVGRSMEQVR (119 aa)). Position 56 is a 4-aspartylphosphate (Asp56). The 193-residue stretch at 163–355 (PLGGHRLLVI…PEILRRLARQ (193 aa)) folds into the CheB-type methylesterase domain. Catalysis depends on residues Ser175, His201, and Asp297.

The protein belongs to the CheB family. Post-translationally, phosphorylated by CheA. Phosphorylation of the N-terminal regulatory domain activates the methylesterase activity.

The protein localises to the cytoplasm. It carries out the reaction [protein]-L-glutamate 5-O-methyl ester + H2O = L-glutamyl-[protein] + methanol + H(+). The enzyme catalyses L-glutaminyl-[protein] + H2O = L-glutamyl-[protein] + NH4(+). Its function is as follows. Involved in chemotaxis. Part of a chemotaxis signal transduction system that modulates chemotaxis in response to various stimuli. Catalyzes the demethylation of specific methylglutamate residues introduced into the chemoreceptors (methyl-accepting chemotaxis proteins or MCP) by CheR. Also mediates the irreversible deamidation of specific glutamine residues to glutamic acid. This is Protein-glutamate methylesterase/protein-glutamine glutaminase from Nocardioides sp. (strain ATCC BAA-499 / JS614).